Consider the following 179-residue polypeptide: Large ribosomal subunit protein uL5 (179 aa).

This sequence belongs to the universal ribosomal protein uL5 family. Part of the 50S ribosomal subunit; part of the 5S rRNA/L5/L18/L25 subcomplex. Contacts the 5S rRNA and the P site tRNA. Forms a bridge to the 30S subunit in the 70S ribosome.

This is one of the proteins that bind and probably mediate the attachment of the 5S RNA into the large ribosomal subunit, where it forms part of the central protuberance. In the 70S ribosome it contacts protein S13 of the 30S subunit (bridge B1b), connecting the 2 subunits; this bridge is implicated in subunit movement. Contacts the P site tRNA; the 5S rRNA and some of its associated proteins might help stabilize positioning of ribosome-bound tRNAs. This is Large ribosomal subunit protein uL5 from Burkholderia multivorans (strain ATCC 17616 / 249).